Consider the following 172-residue polypeptide: Large ribosomal subunit protein uL10 (172 aa).

This sequence belongs to the universal ribosomal protein uL10 family. As to quaternary structure, part of the ribosomal stalk of the 50S ribosomal subunit. The N-terminus interacts with L11 and the large rRNA to form the base of the stalk. The C-terminus forms an elongated spine to which L12 dimers bind in a sequential fashion forming a multimeric L10(L12)X complex.

In terms of biological role, forms part of the ribosomal stalk, playing a central role in the interaction of the ribosome with GTP-bound translation factors. This Ruegeria sp. (strain TM1040) (Silicibacter sp.) protein is Large ribosomal subunit protein uL10.